Here is a 206-residue protein sequence, read N- to C-terminus: Probable metallo-hydrolase MJ0888 (206 aa).

Histidine 55, histidine 57, aspartate 59, histidine 60, histidine 130, aspartate 147, and histidine 190 together coordinate Zn(2+).

The protein belongs to the metallo-beta-lactamase superfamily. Zn(2+) serves as cofactor.

The chain is Probable metallo-hydrolase MJ0888 from Methanocaldococcus jannaschii (strain ATCC 43067 / DSM 2661 / JAL-1 / JCM 10045 / NBRC 100440) (Methanococcus jannaschii).